The sequence spans 104 residues: L-rhamnose mutarotase (104 aa).

A substrate-binding site is contributed by tyrosine 18. Histidine 22 functions as the Proton donor in the catalytic mechanism. Residues tyrosine 41 and 76-77 (WW) each bind substrate.

It belongs to the rhamnose mutarotase family. In terms of assembly, homodimer.

The protein localises to the cytoplasm. It carries out the reaction alpha-L-rhamnose = beta-L-rhamnose. It functions in the pathway carbohydrate metabolism; L-rhamnose metabolism. Functionally, involved in the anomeric conversion of L-rhamnose. The protein is L-rhamnose mutarotase of Klebsiella pneumoniae subsp. pneumoniae (strain ATCC 700721 / MGH 78578).